A 159-amino-acid chain; its full sequence is ATP synthase subunit b 2 (159 aa).

The chain crosses the membrane as a helical span at residues Met-1–Met-21.

The protein belongs to the ATPase B chain family. In terms of assembly, F-type ATPases have 2 components, F(1) - the catalytic core - and F(0) - the membrane proton channel. F(1) has five subunits: alpha(3), beta(3), gamma(1), delta(1), epsilon(1). F(0) has three main subunits: a(1), b(2) and c(10-14). The alpha and beta chains form an alternating ring which encloses part of the gamma chain. F(1) is attached to F(0) by a central stalk formed by the gamma and epsilon chains, while a peripheral stalk is formed by the delta and b chains.

The protein resides in the cell inner membrane. Its function is as follows. F(1)F(0) ATP synthase produces ATP from ADP in the presence of a proton or sodium gradient. F-type ATPases consist of two structural domains, F(1) containing the extramembraneous catalytic core and F(0) containing the membrane proton channel, linked together by a central stalk and a peripheral stalk. During catalysis, ATP synthesis in the catalytic domain of F(1) is coupled via a rotary mechanism of the central stalk subunits to proton translocation. Functionally, component of the F(0) channel, it forms part of the peripheral stalk, linking F(1) to F(0). The chain is ATP synthase subunit b 2 from Brucella ovis (strain ATCC 25840 / 63/290 / NCTC 10512).